Here is a 338-residue protein sequence, read N- to C-terminus: Peptidyl-prolyl cis-trans isomerase cyp11 (338 aa).

Residues Phe7–Glu172 form the PPIase cyclophilin-type domain. The tract at residues Ala186–Tyr338 is disordered. A compositionally biased stretch (acidic residues) spans Asp208–Glu218. Over residues Arg223–Arg242 the composition is skewed to basic residues. The segment covering Glu243 to Val309 has biased composition (basic and acidic residues). Positions Arg329–Tyr338 are enriched in basic residues.

Belongs to the cyclophilin-type PPIase family.

It carries out the reaction [protein]-peptidylproline (omega=180) = [protein]-peptidylproline (omega=0). PPIases accelerate the folding of proteins. It catalyzes the cis-trans isomerization of proline imidic peptide bonds in oligopeptides. This is Peptidyl-prolyl cis-trans isomerase cyp11 (cyp11) from Rhizopus delemar (strain RA 99-880 / ATCC MYA-4621 / FGSC 9543 / NRRL 43880) (Mucormycosis agent).